The following is a 599-amino-acid chain: Glycerophosphodiester phosphodiesterase domain-containing protein 5 (599 aa).

The Cytoplasmic portion of the chain corresponds to 1–42 (MVKHQPLQYYEPQLCLSCLTGIYGCRWKRYQRSHDDTTKWER). 2 disulfide bridges follow: Cys15/Cys18 and Cys25/Cys576. A helical transmembrane segment spans residues 43-63 (LWFLILTSSFFLTLVWFYFWW). At 64 to 87 (EVHNDYNEINWFLYNRMGYWSDWS) the chain is on the extracellular side. Residues 88 to 108 (IPILVTTAAGFTYITVLLILA) traverse the membrane as a helical segment. The Cytoplasmic segment spans residues 109–125 (LCHIAVGQQMNLHWLHK). A helical transmembrane segment spans residues 126 to 146 (IGLMTTLITTVVTMSSIAQLW). The Extracellular portion of the chain corresponds to 147-160 (DDEWEMVFISLQAT). Residues 161–181 (APFLHIGALAAVTALSWLIAG) traverse the membrane as a helical segment. The Cytoplasmic segment spans residues 182 to 192 (QFARMEKATSQ). A helical transmembrane segment spans residues 193–213 (MLMVTAYLAVVVALYLVPLTI). The Extracellular portion of the chain corresponds to 214–497 (SSPCIMEKKA…IWLMPPDEYR (284 aa)). In terms of domain architecture, GP-PDE spans 228-485 (PAIIGHRGAP…DSSHVLRKVP (258 aa)). N-linked (GlcNAc...) asparagine glycosylation is found at Asn301, Asn336, Asn352, Asn374, and Asn448. A helical membrane pass occupies residues 498 to 518 (LIWITSDLISFIIIVGVFIFQ). The Cytoplasmic portion of the chain corresponds to 519-599 (NYHNDQWRLG…DHRDTRLRMN (81 aa)).

This sequence belongs to the glycerophosphoryl diester phosphodiesterase family. In terms of assembly, interacts with PRDX1; forms a mixed-disulfide with PRDX1, leading to disrupt intramolecular disulfide bond between Cys-25 and Cys-576. Post-translationally, intramolecular disulfide bond between Cys-25 and Cys-576 is reduced by PRDX1. Detected in mature motor neurons.

The protein localises to the endomembrane system. Its subcellular location is the cytoplasm. It localises to the perinuclear region. It is found in the cell projection. The protein resides in the growth cone. The catalysed reaction is a 1,2-diacyl-sn-glycero-3-phospho-(1D-myo-inositol-4,5-bisphosphate) + H2O = 1D-myo-inositol 1,4,5-trisphosphate + a 1,2-diacyl-sn-glycerol + H(+). It carries out the reaction sn-glycerol 3-phosphocholine + H2O = sn-glycerol 3-phosphate + choline + H(+). With respect to regulation, activated by PRDX1 by reduction of an intramolecular disulfide bond. In terms of biological role, glycerophosphodiester phosphodiesterase that promotes cell cycle exit and drives spinal motor neuron differentiation. Mediates the cleavage of glycosylphosphatidylinositol (GPI) anchor of target proteins: removes the GPI-anchor of RECK, leading to release RECK from the plasma membrane. May contribute to the osmotic regulation of cellular glycerophosphocholine. The polypeptide is Glycerophosphodiester phosphodiesterase domain-containing protein 5 (GDPD5) (Gallus gallus (Chicken)).